We begin with the raw amino-acid sequence, 1532 residues long: Glycogen debranching enzyme (1532 aa).

A Phosphoserine modification is found at Ser-64. Residues Asp-526, His-529, and Asp-627 contribute to the active site.

The protein belongs to the glycogen debranching enzyme family. As to quaternary structure, monomer. Interacts with NHLRC1/malin. In terms of processing, the N-terminus is blocked. Post-translationally, ubiquitinated. In terms of tissue distribution, liver, kidney and lymphoblastoid cells express predominantly isoform 1; whereas muscle and heart express not only isoform 1, but also muscle-specific isoform mRNAs (isoforms 2, 3 and 4). Isoforms 5 and 6 are present in both liver and muscle.

Its subcellular location is the cytoplasm. The catalysed reaction is Transfers a segment of a (1-&gt;4)-alpha-D-glucan to a new position in an acceptor, which may be glucose or a (1-&gt;4)-alpha-D-glucan.. The enzyme catalyses Hydrolysis of (1-&gt;6)-alpha-D-glucosidic branch linkages in glycogen phosphorylase limit dextrin.. Its function is as follows. Multifunctional enzyme acting as 1,4-alpha-D-glucan:1,4-alpha-D-glucan 4-alpha-D-glycosyltransferase and amylo-1,6-glucosidase in glycogen degradation. The chain is Glycogen debranching enzyme (AGL) from Homo sapiens (Human).